The following is a 303-amino-acid chain: Inosose dehydratase (303 aa).

This sequence belongs to the IolE/MocC family. Requires glutathione as cofactor. It depends on Co(2+) as a cofactor. The cofactor is Mn(2+).

The catalysed reaction is scyllo-inosose = 3D-3,5/4-trihydroxycyclohexane-1,2-dione + H2O. The protein operates within polyol metabolism; myo-inositol degradation into acetyl-CoA; acetyl-CoA from myo-inositol: step 2/7. In terms of biological role, catalyzes the dehydration of inosose (2-keto-myo-inositol, 2KMI or 2,4,6/3,5-pentahydroxycyclohexanone) to 3D-(3,5/4)-trihydroxycyclohexane-1,2-dione (D-2,3-diketo-4-deoxy-epi-inositol). This is Inosose dehydratase from Halalkalibacterium halodurans (strain ATCC BAA-125 / DSM 18197 / FERM 7344 / JCM 9153 / C-125) (Bacillus halodurans).